Here is a 445-residue protein sequence, read N- to C-terminus: Trigger factor (445 aa).

The PPIase FKBP-type domain occupies 171-256; the sequence is NDIVIIDFKG…VHVVNEVETP (86 aa).

The protein belongs to the FKBP-type PPIase family. Tig subfamily.

It localises to the cytoplasm. The catalysed reaction is [protein]-peptidylproline (omega=180) = [protein]-peptidylproline (omega=0). Functionally, involved in protein export. Acts as a chaperone by maintaining the newly synthesized protein in an open conformation. Functions as a peptidyl-prolyl cis-trans isomerase. The protein is Trigger factor of Malacoplasma penetrans (strain HF-2) (Mycoplasma penetrans).